The primary structure comprises 493 residues: Intermediate cleaving peptidase 55, mitochondrial (493 aa).

A mitochondrion-targeting transit peptide spans 1–19 (MQFLARNLVRRVSRTQVVS). Mn(2+)-binding residues include D296, D307, H383, E410, and E433.

Belongs to the peptidase M24B family. Requires Mn(2+) as cofactor.

The protein resides in the mitochondrion. The protein localises to the nucleus. Its function is as follows. Aminopeptidase which cleaves preprotein intermediates that carry destabilizing N-ter amino acid residues after the mitochondrial processing peptidase (MPP) cleavage site and is thus critical for stabilization of the mitochondrial proteome. The chain is Intermediate cleaving peptidase 55, mitochondrial from Arabidopsis thaliana (Mouse-ear cress).